The chain runs to 719 residues: Polyribonucleotide nucleotidyltransferase (719 aa).

2 residues coordinate Mg(2+): aspartate 490 and aspartate 496. One can recognise a KH domain in the interval 557-619 (PKIEIIIIPK…KSIDAALTRI (63 aa)). Positions 629–699 (GEIYEGKIRS…KTGKFKLSHK (71 aa)) constitute an S1 motif domain.

The protein belongs to the polyribonucleotide nucleotidyltransferase family. Requires Mg(2+) as cofactor.

It localises to the cytoplasm. The catalysed reaction is RNA(n+1) + phosphate = RNA(n) + a ribonucleoside 5'-diphosphate. Its function is as follows. Involved in mRNA degradation. Catalyzes the phosphorolysis of single-stranded polyribonucleotides processively in the 3'- to 5'-direction. In Azobacteroides pseudotrichonymphae genomovar. CFP2, this protein is Polyribonucleotide nucleotidyltransferase.